A 109-amino-acid polypeptide reads, in one-letter code: MKVLVLFSVLFLTLFSYSSTEAIDEFDSDAEDDMLSLMANEQVRAKACTPRLHDCSHDRHSCCRGELFKDVCYCFYPEGEDKTEVCSCQQPKSHKYIEKVVDKAKTVVG.

An N-terminal signal peptide occupies residues 1–22 (MKVLVLFSVLFLTLFSYSSTEA). Positions 23-44 (IDEFDSDAEDDMLSLMANEQVR) are excised as a propeptide. A knottin domain region spans residues 45–88 (AKACTPRLHDCSHDRHSCCRGELFKDVCYCFYPEGEDKTEVCSC). 4 disulfides stabilise this stretch: C48/C63, C55/C72, C62/C88, and C74/C86. The segment at 89–108 (QQPKSHKYIEKVVDKAKTVV) is linear cationic cytotoxin domain.

Belongs to the neurotoxin 19 (CSTX) family. 05 (U4-Lctx) subfamily. As to expression, expressed by the venom gland.

It localises to the secreted. Functionally, enhances the high-affinity desensitization of human P2RX3 purinoceptors. In Lycosa singoriensis (Wolf spider), this protein is U4-lycotoxin-Ls1a.